Consider the following 164-residue polypeptide: NADH-quinone oxidoreductase subunit C (164 aa).

It belongs to the complex I 30 kDa subunit family. In terms of assembly, NDH-1 is composed of 14 different subunits. Subunits NuoB, C, D, E, F, and G constitute the peripheral sector of the complex.

The protein resides in the cell inner membrane. The enzyme catalyses a quinone + NADH + 5 H(+)(in) = a quinol + NAD(+) + 4 H(+)(out). Its function is as follows. NDH-1 shuttles electrons from NADH, via FMN and iron-sulfur (Fe-S) centers, to quinones in the respiratory chain. The immediate electron acceptor for the enzyme in this species is believed to be ubiquinone. Couples the redox reaction to proton translocation (for every two electrons transferred, four hydrogen ions are translocated across the cytoplasmic membrane), and thus conserves the redox energy in a proton gradient. The polypeptide is NADH-quinone oxidoreductase subunit C (Geotalea uraniireducens (strain Rf4) (Geobacter uraniireducens)).